We begin with the raw amino-acid sequence, 157 residues long: 2-C-methyl-D-erythritol 2,4-cyclodiphosphate synthase (157 aa).

Asp-9 and His-11 together coordinate a divalent metal cation. 4-CDP-2-C-methyl-D-erythritol 2-phosphate is bound by residues 9–11 (DVH) and 35–36 (HS). Position 43 (His-43) interacts with a divalent metal cation. Residues 57–59 (DIG), 62–66 (FPDTD), 101–107 (AEKPKMA), 133–136 (TTTE), Phe-140, and Arg-143 contribute to the 4-CDP-2-C-methyl-D-erythritol 2-phosphate site.

The protein belongs to the IspF family. As to quaternary structure, homotrimer. A divalent metal cation serves as cofactor.

It catalyses the reaction 4-CDP-2-C-methyl-D-erythritol 2-phosphate = 2-C-methyl-D-erythritol 2,4-cyclic diphosphate + CMP. It participates in isoprenoid biosynthesis; isopentenyl diphosphate biosynthesis via DXP pathway; isopentenyl diphosphate from 1-deoxy-D-xylulose 5-phosphate: step 4/6. Involved in the biosynthesis of isopentenyl diphosphate (IPP) and dimethylallyl diphosphate (DMAPP), two major building blocks of isoprenoid compounds. Catalyzes the conversion of 4-diphosphocytidyl-2-C-methyl-D-erythritol 2-phosphate (CDP-ME2P) to 2-C-methyl-D-erythritol 2,4-cyclodiphosphate (ME-CPP) with a corresponding release of cytidine 5-monophosphate (CMP). The polypeptide is 2-C-methyl-D-erythritol 2,4-cyclodiphosphate synthase (Listeria monocytogenes serotype 4a (strain HCC23)).